The sequence spans 54 residues: UPF0391 membrane protein PFL_0093 (54 aa).

Helical transmembrane passes span 4 to 24 (WAIT…GGIA) and 29 to 49 (GIAK…FFFG).

Belongs to the UPF0391 family.

The protein localises to the cell membrane. The polypeptide is UPF0391 membrane protein PFL_0093 (Pseudomonas fluorescens (strain ATCC BAA-477 / NRRL B-23932 / Pf-5)).